The primary structure comprises 278 residues: 4-deoxy-L-threo-5-hexosulose-uronate ketol-isomerase (278 aa).

Positions 196, 198, 203, and 245 each coordinate Zn(2+).

Belongs to the KduI family. It depends on Zn(2+) as a cofactor.

The enzyme catalyses 5-dehydro-4-deoxy-D-glucuronate = 3-deoxy-D-glycero-2,5-hexodiulosonate. Its pathway is glycan metabolism; pectin degradation; 2-dehydro-3-deoxy-D-gluconate from pectin: step 4/5. Functionally, catalyzes the isomerization of 5-dehydro-4-deoxy-D-glucuronate to 3-deoxy-D-glycero-2,5-hexodiulosonate. The sequence is that of 4-deoxy-L-threo-5-hexosulose-uronate ketol-isomerase from Enterobacter sp. (strain 638).